Here is an 809-residue protein sequence, read N- to C-terminus: Cell division control protein 48 homolog A (809 aa).

The residue at position 2 (serine 2) is an N-acetylserine. Position 41 is a phosphoserine (serine 41). Residues glycine 210, 248 to 256 (GPPGSGKTL), and histidine 387 each bind ADP. ATP is bound at residue 521–529 (GPPGCGKTL). The interval 782–809 (AGSGATTGVADPFATSAAAAGDDDDLYN) is disordered. Residues 791–801 (ADPFATSAAAA) show a composition bias toward low complexity.

It belongs to the AAA ATPase family. In terms of assembly, homohexamer. Interacts with SERK1, GRF6, KAPP and SYP31, but not with KNOLLE. Component of the SERK1 signaling complex, composed of KAPP, CDC48A, GRF6 or GRF7, SERK1, SERK2, SERK3/BAK1 and BRI1. Interacts with PUX1, PUX2, PUX3, PUX4, PUX5, PUX7 and PUX11 via its N-terminus. In terms of processing, phosphorylated on at least one threonine residue and on Ser-41 by SERK1.

Its subcellular location is the nucleus. The protein resides in the cytoplasm. It is found in the cytoskeleton. The protein localises to the phragmoplast. It localises to the cell membrane. In terms of biological role, probably functions in cell division and growth processes. Interacts with certain SNAREs as part of specialized membrane fusion events where vesicles from the same organelle fuse (homotypic fusion). This Arabidopsis thaliana (Mouse-ear cress) protein is Cell division control protein 48 homolog A (CDC48A).